Consider the following 459-residue polypeptide: MLKIFNTLTREKEVFKPISENKVGMYVCGVTVYDLCHIGHGRTFVCFDVIARYLRYLGYELTYVRNITDVDDKIIRRALENKETCEQLVDRMVVEMYKDFDALNVLRPDFEPRATHHIAEIIALVEKLIARGHAYVADNGDVMFDVESFKEYGKLSRQDLTQLQAGARVEISEIKKNPMDFVLWKMSKENEPSWNSPWGAGRPGWHIECSAMNCKHLGEHFDIHGGGADLMFPHHENEIAQSCCAHGNRYVNYWIHSGMIMVDKEKMSKSLGNFFTIRDVLNHYDAESVRYFLLTAHYRSQLNYSEENLDLAHGALERLYTALRGTDKSAVSFGGENFIAQFTEAMNDDFNTPNAISVLFEMAREINRLKNEDKLLADGLAARLRELASILGLLDQDPEDFLQAGSDDAEIAKIEELIKQRNDARQAKDWARADAARNELTTMGVILEDSSNGTMWRKM.

Cys-28 contributes to the Zn(2+) binding site. Residues 30 to 40 carry the 'HIGH' region motif; the sequence is VTVYDLCHIGH. The Zn(2+) site is built by Cys-209, His-234, and Glu-238. Positions 266–270 match the 'KMSKS' region motif; it reads KMSKS. Position 269 (Lys-269) interacts with ATP.

It belongs to the class-I aminoacyl-tRNA synthetase family. In terms of assembly, monomer. Requires Zn(2+) as cofactor.

It is found in the cytoplasm. The catalysed reaction is tRNA(Cys) + L-cysteine + ATP = L-cysteinyl-tRNA(Cys) + AMP + diphosphate. This Histophilus somni (strain 2336) (Haemophilus somnus) protein is Cysteine--tRNA ligase.